The sequence spans 281 residues: Putative pyruvate, phosphate dikinase regulatory protein (281 aa).

150 to 157 is a binding site for ADP; that stretch reads GVSRTSKT.

The protein belongs to the pyruvate, phosphate/water dikinase regulatory protein family. PDRP subfamily.

It catalyses the reaction N(tele)-phospho-L-histidyl/L-threonyl-[pyruvate, phosphate dikinase] + ADP = N(tele)-phospho-L-histidyl/O-phospho-L-threonyl-[pyruvate, phosphate dikinase] + AMP + H(+). The enzyme catalyses N(tele)-phospho-L-histidyl/O-phospho-L-threonyl-[pyruvate, phosphate dikinase] + phosphate + H(+) = N(tele)-phospho-L-histidyl/L-threonyl-[pyruvate, phosphate dikinase] + diphosphate. In terms of biological role, bifunctional serine/threonine kinase and phosphorylase involved in the regulation of the pyruvate, phosphate dikinase (PPDK) by catalyzing its phosphorylation/dephosphorylation. This Sorangium cellulosum (strain So ce56) (Polyangium cellulosum (strain So ce56)) protein is Putative pyruvate, phosphate dikinase regulatory protein.